A 134-amino-acid polypeptide reads, in one-letter code: Holo-[acyl-carrier-protein] synthase (134 aa).

Mg(2+) is bound by residues Asp8 and Glu57.

Belongs to the P-Pant transferase superfamily. AcpS family. It depends on Mg(2+) as a cofactor.

The protein resides in the cytoplasm. The enzyme catalyses apo-[ACP] + CoA = holo-[ACP] + adenosine 3',5'-bisphosphate + H(+). Its function is as follows. Transfers the 4'-phosphopantetheine moiety from coenzyme A to a Ser of acyl-carrier-protein. This chain is Holo-[acyl-carrier-protein] synthase, found in Roseobacter denitrificans (strain ATCC 33942 / OCh 114) (Erythrobacter sp. (strain OCh 114)).